Here is a 292-residue protein sequence, read N- to C-terminus: Histamine N-methyltransferase (292 aa).

Substrate is bound at residue Glu28. The S-adenosyl-L-methionine site is built by Gly60, Glu89, Gln94, Ser120, and Ile142. A substrate-binding site is contributed by Asn283.

This sequence belongs to the class I-like SAM-binding methyltransferase superfamily. HNMT family. Monomer.

The protein resides in the cytoplasm. The enzyme catalyses histamine + S-adenosyl-L-methionine = N(tau)-methylhistamine + S-adenosyl-L-homocysteine + H(+). Its function is as follows. Inactivates histamine by N-methylation. Plays an important role in degrading histamine and in regulating the airway response to histamine. The protein is Histamine N-methyltransferase (HNMT) of Homo sapiens (Human).